The primary structure comprises 1380 residues: DNA-directed RNA polymerase subunit beta (1380 aa).

The protein belongs to the RNA polymerase beta chain family. As to quaternary structure, the RNAP catalytic core consists of 2 alpha, 1 beta, 1 beta' and 1 omega subunit. When a sigma factor is associated with the core the holoenzyme is formed, which can initiate transcription.

The catalysed reaction is RNA(n) + a ribonucleoside 5'-triphosphate = RNA(n+1) + diphosphate. Its function is as follows. DNA-dependent RNA polymerase catalyzes the transcription of DNA into RNA using the four ribonucleoside triphosphates as substrates. This Rhizobium rhizogenes (strain K84 / ATCC BAA-868) (Agrobacterium radiobacter) protein is DNA-directed RNA polymerase subunit beta.